The chain runs to 161 residues: Large ribosomal subunit protein uL11 (161 aa).

It belongs to the universal ribosomal protein uL11 family. Part of the ribosomal stalk of the 50S ribosomal subunit. Interacts with L10 and the large rRNA to form the base of the stalk. L10 forms an elongated spine to which L12 dimers bind in a sequential fashion forming a multimeric L10(L12)X complex.

Forms part of the ribosomal stalk which helps the ribosome interact with GTP-bound translation factors. The protein is Large ribosomal subunit protein uL11 of Methanosarcina barkeri (strain Fusaro / DSM 804).